The sequence spans 355 residues: Alanine racemase (355 aa).

Lys37 serves as the catalytic Proton acceptor; specific for D-alanine. Lys37 is subject to N6-(pyridoxal phosphate)lysine. Substrate is bound at residue Arg129. Tyr251 functions as the Proton acceptor; specific for L-alanine in the catalytic mechanism. Met299 serves as a coordination point for substrate.

This sequence belongs to the alanine racemase family. It depends on pyridoxal 5'-phosphate as a cofactor.

The enzyme catalyses L-alanine = D-alanine. The protein operates within amino-acid biosynthesis; D-alanine biosynthesis; D-alanine from L-alanine: step 1/1. In terms of biological role, catalyzes the interconversion of L-alanine and D-alanine. May also act on other amino acids. This chain is Alanine racemase (alr), found in Deinococcus geothermalis (strain DSM 11300 / CIP 105573 / AG-3a).